A 122-amino-acid chain; its full sequence is MIQQESRLKVADNTGAKEILCIRVLGGSSRRYAGIGDIIVATVKDAIPGGNVKRGDVVKAVVVRTVKERRRPDGSYIKFDENAAVIIKPDNDPRGTRIFGPVGRELREKRFMKIISLAPEVL.

It belongs to the universal ribosomal protein uL14 family. Part of the 50S ribosomal subunit. Forms a cluster with proteins L3 and L19. In the 70S ribosome, L14 and L19 interact and together make contacts with the 16S rRNA in bridges B5 and B8.

In terms of biological role, binds to 23S rRNA. Forms part of two intersubunit bridges in the 70S ribosome. This is Large ribosomal subunit protein uL14 from Mycobacterium marinum (strain ATCC BAA-535 / M).